The chain runs to 175 residues: Adenine phosphoribosyltransferase (175 aa).

This sequence belongs to the purine/pyrimidine phosphoribosyltransferase family. In terms of assembly, homodimer.

The protein resides in the cytoplasm. The catalysed reaction is AMP + diphosphate = 5-phospho-alpha-D-ribose 1-diphosphate + adenine. It functions in the pathway purine metabolism; AMP biosynthesis via salvage pathway; AMP from adenine: step 1/1. Functionally, catalyzes a salvage reaction resulting in the formation of AMP, that is energically less costly than de novo synthesis. This is Adenine phosphoribosyltransferase from Lactobacillus gasseri (strain ATCC 33323 / DSM 20243 / BCRC 14619 / CIP 102991 / JCM 1131 / KCTC 3163 / NCIMB 11718 / NCTC 13722 / AM63).